The sequence spans 204 residues: Dephospho-CoA kinase (204 aa).

The 192-residue stretch at 13–204 (RIGLTGGIAS…LWKNTIKKLV (192 aa)) folds into the DPCK domain. Residue 21–26 (ASGKST) participates in ATP binding.

Belongs to the CoaE family.

The protein localises to the cytoplasm. The enzyme catalyses 3'-dephospho-CoA + ATP = ADP + CoA + H(+). Its pathway is cofactor biosynthesis; coenzyme A biosynthesis; CoA from (R)-pantothenate: step 5/5. Its function is as follows. Catalyzes the phosphorylation of the 3'-hydroxyl group of dephosphocoenzyme A to form coenzyme A. This Prochlorococcus marinus subsp. pastoris (strain CCMP1986 / NIES-2087 / MED4) protein is Dephospho-CoA kinase.